Consider the following 73-residue polypeptide: Ocellatin-PT6 (73 aa).

The N-terminal stretch at 1 to 22 (MAFLKKSLFLVLFLGLVSLSIC) is a signal peptide. Positions 23-39 (DEEKRQDEDDDDDDDEE) are excised as a propeptide.

In terms of tissue distribution, expressed by the skin glands.

The protein resides in the secreted. Its function is as follows. Has antibacterial activity against Gram-negative bacterium E.coli ATCC 25922 (MIC=120 uM) but not against S.pneumoniae ATCC 700603, S.choleraesuis ATCC 14028 or against Gram-positive bacterium S.aureus ATCC 29313. Shows no hemolytic activity and no cytotoxicity. The protein is Ocellatin-PT6 of Leptodactylus pustulatus (Ceara white-lipped frog).